A 96-amino-acid chain; its full sequence is Small ribosomal subunit protein bS18c (96 aa).

Belongs to the bacterial ribosomal protein bS18 family. In terms of assembly, part of the 30S ribosomal subunit.

The protein resides in the plastid. It is found in the chloroplast. The protein is Small ribosomal subunit protein bS18c (rps18) of Pinus thunbergii (Japanese black pine).